The primary structure comprises 126 residues: Large ribosomal subunit protein bL12 (126 aa).

The protein belongs to the bacterial ribosomal protein bL12 family. As to quaternary structure, homodimer. Part of the ribosomal stalk of the 50S ribosomal subunit. Forms a multimeric L10(L12)X complex, where L10 forms an elongated spine to which 2 to 4 L12 dimers bind in a sequential fashion. Binds GTP-bound translation factors.

Forms part of the ribosomal stalk which helps the ribosome interact with GTP-bound translation factors. Is thus essential for accurate translation. The chain is Large ribosomal subunit protein bL12 from Citrifermentans bemidjiense (strain ATCC BAA-1014 / DSM 16622 / JCM 12645 / Bem) (Geobacter bemidjiensis).